The sequence spans 156 residues: Endogenous retrovirus group K member 113 Pro protein (156 aa).

The Peptidase A2 domain maps to F21–L96. D26 is an active-site residue. Positions Y111 to F156 constitute a G-patch domain.

The protein belongs to the peptidase A2 family. HERV class-II K(HML-2) subfamily. In terms of assembly, active as a homodimer. Post-translationally, autoproteolytically processed at the N-terminus. Expected C-terminal autoprocessing not detected. The sequence shown is that of the processed Pro protein.

The enzyme catalyses Processing at the authentic HIV-1 PR recognition site and release of the mature p17 matrix and the p24 capsid protein, as a result of the cleavage of the -SQNY-|-PIVQ- cleavage site.. Retroviral proteases have roles in the processing of the primary translation products and the maturation of the viral particle. Endogenous Pro proteins may have kept, lost or modified their original function during evolution. The sequence is that of Endogenous retrovirus group K member 113 Pro protein (HERVK_113) from Homo sapiens (Human).